A 717-amino-acid polypeptide reads, in one-letter code: Amino-acid acetyltransferase, mitochondrial (717 aa).

A mitochondrion-targeting transit peptide spans 1-23; it reads MFIWTKAPARGLGKASKILPKRD. Residues 35–70 are disordered; sequence KQFHTATTSVRRSSSSAKERQRAERQQLTRLLKESP. A compositionally biased stretch (low complexity) spans 39-50; that stretch reads TATTSVRRSSSS. Residues 51 to 70 are compositionally biased toward basic and acidic residues; the sequence is AKERQRAERQQLTRLLKESP. One can recognise an N-acetyltransferase domain in the interval 518 to 691; it reads NPSIELADDP…GDVDDAKKRD (174 aa).

It belongs to the acetyltransferase family.

The protein resides in the mitochondrion. The enzyme catalyses L-glutamate + acetyl-CoA = N-acetyl-L-glutamate + CoA + H(+). The protein operates within amino-acid biosynthesis; L-arginine biosynthesis; N(2)-acetyl-L-ornithine from L-glutamate: step 1/4. N-acetylglutamate synthase involved in arginine biosynthesis. The polypeptide is Amino-acid acetyltransferase, mitochondrial (arg2) (Pyrenophora tritici-repentis (strain Pt-1C-BFP) (Wheat tan spot fungus)).